Reading from the N-terminus, the 724-residue chain is MMERKREMGIAYFARRIKQPRGIWVKMTFIVVLGLCFVFFWSFLSSSASTFNVQRESFDDIAEPVSSRTKSAHEVSESSKLHERGKVESGSKSKEGKKVGGSSVHKHETKKKKEHAVSHPHKKKDVPKPVVEEVVVKEDQEHEEAESDDSDQSNKEDGEEGTESDGNEGESDGNGDGSVDDSSASVDEEVEEKNEEVTVNEISKKRKRKGPVFDPKAEYSWRLCNTRSKHNYMPCIDNDGLIGRLQSYRHRERSCPKKPVMCLVPLPHDGYDPPVSWPESKSKILYKNVAHPKLAAYIKKHNWVNETGEYLSFPQNQTTFNGNVLQYLEFIQEMVPDIEWGKNVRIVLDIGCSDSSFVAALLDKDVLTVSLGLKDDLVDLAQVALERGFPTFVSSLASRRLPFPSGVFDTIHCAACGVHWHSHGGKLLLEMNRILRPNGYFILSSNNDKIEDDEAMTALTASICWNILAHKTEEASEMGVRIYQKPESNDIYELRRKKNPPLCEDNENPDAAWYVPMKTCIYEIPSAIEQHGAEWPEEWPKRLETYPEWLTSKEKAMEDTNHWNAMVNKSYLTGLGIDWLHIRNVMDMTAIYGGFGASLVKQNVWVMNVVPVHSPDTLPFIYERGLLGIYHDWCEPFGTYPRSYDLLHADHLFSRLKNRCKQPASIVVEMDRLTRPGGWVVVRDKVEILEPLEEILRSLHWEIRMTYAQDKEGMLCAQKTLWRP.

The Cytoplasmic portion of the chain corresponds to 1–22; it reads MMERKREMGIAYFARRIKQPRG. A helical; Signal-anchor for type II membrane protein transmembrane segment spans residues 23–43; that stretch reads IWVKMTFIVVLGLCFVFFWSF. The Lumenal segment spans residues 44 to 724; the sequence is LSSSASTFNV…LCAQKTLWRP (681 aa). The disordered stretch occupies residues 63 to 211; it reads EPVSSRTKSA…ISKKRKRKGP (149 aa). The segment covering 71–98 has biased composition (basic and acidic residues); sequence SAHEVSESSKLHERGKVESGSKSKEGKK. Residues 107-125 show a composition bias toward basic residues; it reads HETKKKKEHAVSHPHKKKD. Residues 126–140 are compositionally biased toward basic and acidic residues; that stretch reads VPKPVVEEVVVKEDQ. Residues 141–173 are compositionally biased toward acidic residues; it reads EHEEAESDDSDQSNKEDGEEGTESDGNEGESDG. N-linked (GlcNAc...) asparagine glycosylation is found at Asn-305, Asn-316, and Asn-568.

This sequence belongs to the methyltransferase superfamily.

It localises to the golgi apparatus membrane. This Arabidopsis thaliana (Mouse-ear cress) protein is Probable methyltransferase PMT28.